The following is a 190-amino-acid chain: Recombination protein RecR (190 aa).

The segment at 58–73 (CTQCGGLSEDELCYIC) adopts a C4-type zinc-finger fold. In terms of domain architecture, Toprim spans 81-167 (SSLCLVESAR…HFTKIAQGVP (87 aa)).

This sequence belongs to the RecR family.

Functionally, may play a role in DNA repair. It seems to be involved in an RecBC-independent recombinational process of DNA repair. It may act with RecF and RecO. In Nitratiruptor sp. (strain SB155-2), this protein is Recombination protein RecR.